A 417-amino-acid chain; its full sequence is UDP-N-acetylglucosamine 1-carboxyvinyltransferase (417 aa).

Residue 22–23 (KN) participates in phosphoenolpyruvate binding. Residue arginine 92 participates in UDP-N-acetyl-alpha-D-glucosamine binding. Residue cysteine 116 is the Proton donor of the active site. 2-(S-cysteinyl)pyruvic acid O-phosphothioketal is present on cysteine 116. Residues 161 to 164 (KVSV), aspartate 305, and isoleucine 327 contribute to the UDP-N-acetyl-alpha-D-glucosamine site.

It belongs to the EPSP synthase family. MurA subfamily.

The protein localises to the cytoplasm. It catalyses the reaction phosphoenolpyruvate + UDP-N-acetyl-alpha-D-glucosamine = UDP-N-acetyl-3-O-(1-carboxyvinyl)-alpha-D-glucosamine + phosphate. Its pathway is cell wall biogenesis; peptidoglycan biosynthesis. In terms of biological role, cell wall formation. Adds enolpyruvyl to UDP-N-acetylglucosamine. This chain is UDP-N-acetylglucosamine 1-carboxyvinyltransferase, found in Pelagibacter ubique (strain HTCC1062).